Consider the following 361-residue polypeptide: Lactate-binding periplasmic protein TTHA0766 (361 aa).

Residues 1–22 constitute a signal peptide (tat-type signal); that stretch reads MKRVSRRAFLRRLGVGVAATAA. Positions 101, 158, and 178 each coordinate substrate. Asparagine 158 contacts Ca(2+). Ca(2+) is bound by residues aspartate 216, phenylalanine 217, and glutamine 247. Substrate is bound by residues phenylalanine 217 and 247-250; that span reads QPVD.

This sequence belongs to the bacterial solute-binding protein 7 family. Homodimer. The complex comprises the extracytoplasmic solute receptor protein TTHA0766, and the two putative transmembrane proteins TTHA0767 and TTHA0768.

The protein resides in the periplasm. Functionally, part of the tripartite ATP-independent periplasmic (TRAP) transport system involved in the uptake of lactate. This protein specifically binds L-lactate. This is Lactate-binding periplasmic protein TTHA0766 from Thermus thermophilus (strain ATCC 27634 / DSM 579 / HB8).